The following is a 173-amino-acid chain: MVDSNNDAFDGEKSKTQIKRELHELVELGERLTTLKADTLARLPLTDELRKALAEASKHTAHGARKRHMSFVGKLMRVQDLDAIHALLEQMDSSSRQYNERFHSLERWRDRLIDGNDEDLERFVNEYPDTDRQQLRSLVRHAQHEKARNKPPAAARKVFKYIRDLDELQRGLR.

It belongs to the DarP family.

Its subcellular location is the cytoplasm. Functionally, member of a network of 50S ribosomal subunit biogenesis factors which assembles along the 30S-50S interface, preventing incorrect 23S rRNA structures from forming. Promotes peptidyl transferase center (PTC) maturation. The polypeptide is Dual-action ribosomal maturation protein DarP (Pseudomonas putida (strain GB-1)).